The chain runs to 378 residues: tRNA (guanine(26)-N(2))-dimethyltransferase (378 aa).

The region spanning 4-374 (KEVTEGKVRI…KGYEEIIRCV (371 aa)) is the Trm1 methyltransferase domain. Positions 44, 69, 87, 114, and 115 each coordinate S-adenosyl-L-methionine. The Zn(2+) site is built by cysteine 246, cysteine 249, cysteine 263, and cysteine 266.

Belongs to the class I-like SAM-binding methyltransferase superfamily. Trm1 family.

The catalysed reaction is guanosine(26) in tRNA + 2 S-adenosyl-L-methionine = N(2)-dimethylguanosine(26) in tRNA + 2 S-adenosyl-L-homocysteine + 2 H(+). Its function is as follows. Dimethylates a single guanine residue at position 26 of a number of tRNAs using S-adenosyl-L-methionine as donor of the methyl groups. The chain is tRNA (guanine(26)-N(2))-dimethyltransferase from Saccharolobus islandicus (strain M.16.27) (Sulfolobus islandicus).